A 773-amino-acid chain; its full sequence is Angiomotin-like protein 2 (773 aa).

Disordered stretches follow at residues 41–157 (GGAG…HVRS), 169–238 (RNGA…SPHF), and 259–309 (QYQY…LAQM). 3 stretches are compositionally biased toward basic and acidic residues: residues 80 to 91 (QGGETHLAENRL), 100 to 112 (KGEELPTYEEAKA), and 141 to 152 (RRQDEALRELRH). A required for interaction with CDH5 region spans residues 101 to 302 (GEELPTYEEA…GPPGAQATSG (202 aa)). Residue tyrosine 107 is modified to Phosphotyrosine; by FGFR1. Polar residues predominate over residues 177 to 190 (HMSSSHSFPQLARS). Positions 196 to 213 (PRGPPAEGPEPRGPPPQY) are enriched in pro residues. The tract at residues 220–302 (QETAAVNDPR…GPPGAQATSG (83 aa)) is required for interaction with CDH1. Positions 304 to 577 (AHLAQMESVL…KYLEERAMRQ (274 aa)) form a coiled coil. Residues lysine 342 and lysine 403 each participate in a glycyl lysine isopeptide (Lys-Gly) (interchain with G-Cter in ubiquitin) cross-link. Disordered regions lie at residues 589–611 (QRDTTLIRHSPQPSPSSSFNEGL) and 677–754 (WQGF…TTSL). The span at 701–710 (EEPPATPPLP) shows a compositional bias: pro residues. Over residues 719-734 (DGSTQTDGPADSTSAC) the composition is skewed to polar residues. Residues serine 753 and serine 756 each carry the phosphoserine modification. Positions 770 to 773 (EILI) match the PDZ-binding motif.

Belongs to the angiomotin family. In terms of assembly, part of a complex composed of AMOTL2, MAGI1 and CDH5, within the complex AMOTL2 acts as a scaffold protein for the interaction of MAGI1 with CDH5. The complex is required for coupling actin fibers to cell junctions in endothelial cells. Within the complex AMOTL2 (via its N-terminus) interacts with CDH5. Interacts (via N-terminus) with MAGI1. Interacts (via N-terminus) with ACTB; the interaction facilitates binding of cell junction complexes to actin fibers in endothelial cells. Interacts with CDH1; the interaction may facilitate binding of radial actin fibers to cell junction complexes. Interacts with SRC. Interacts with YAP1; the interaction is required for ubiquitination of AMOTL2 and localization of YAP1 to tight junctions. Interacts with WWP1; the interaction facilitates WWP1 interaction with the Crumbs complex and subsequent WWP1 translocation to the plasma membrane. WWP1 interaction with the Crumbs complex promotes WWP1 monoubiquitination of AMOTL2 which subsequently activates the Hippo signaling pathway. When ubiquitinated interacts with LATS2 (via UBA domain); the interaction promotes LATS2 phosphorylation of YAP1. Interacts (via PPXY motif) with WWTR1/TAZ (via WW domain); the interaction promotes WWTR1/TAZ localization to the cytoplasm and thereby inhibition of its transcriptional properties. Interacts with PHLDB2; interaction may facilitate PHLDB2 localization to the myotube podosome cortex that surrounds the core. Monoubiquitinated at Lys-342 and Lys-403 by Crumbs complex-bound WWP1. De-ubiquitinated at Lys-342 and Lys-403 by USP9X; the interaction may be promoted by cell contact inhibition. Deubiquitination of AMOTL2 negatively regulates Hippo signaling activation. In terms of processing, phosphorylation at Tyr-107 is necessary for efficient binding to SRC and synergistically functioning with SRC to activate the downstream MAPK pathway.

The protein localises to the recycling endosome. The protein resides in the cytoplasm. It is found in the cell projection. Its subcellular location is the podosome. It localises to the cell junction. Functionally, regulates the translocation of phosphorylated SRC to peripheral cell-matrix adhesion sites. Required for proper architecture of actin filaments. Plays a role in coupling actin fibers to cell junctions in endothelial cells and is therefore required for correct endothelial cell morphology via facilitating transcellular transmission of mechanical force resulting in endothelial cell elongation. Required for the anchoring of radial actin fibers to CDH1 junction complexes at the cell membrane which facilitates organization of radial actin fiber structure and cellular response to contractile forces. This contributes to maintenance of cell area, size, shape, epithelial sheet organization and trophectoderm cell properties that facilitate blastocyst zona hatching. Inhibits the Wnt/beta-catenin signaling pathway, probably by recruiting CTNNB1 to recycling endosomes and hence preventing its translocation to the nucleus. Participates in angiogenesis. Activates the Hippo signaling pathway in response to cell contact inhibition via interaction with and ubiquitination by Crumbs complex-bound WWP1. Ubiquitinated AMOTL2 then interacts with LATS2 which in turn phosphorylates YAP1, excluding it from the nucleus and localizing it to the cytoplasm and tight junctions, therefore ultimately repressing YAP1-driven transcription of target genes. Acts to inhibit WWTR1/TAZ transcriptional coactivator activity via sequestering WWTR1/TAZ in the cytoplasm and at tight junctions. Regulates the size and protein composition of the podosome cortex and core at myofibril neuromuscular junctions. Selectively promotes FGF-induced MAPK activation through SRC. May play a role in the polarity, proliferation and migration of endothelial cells. This is Angiomotin-like protein 2 from Rattus norvegicus (Rat).